The following is a 485-amino-acid chain: uncharacterized protein (485 aa).

3 helical membrane passes run 284 to 304 (LLAL…YPLF), 328 to 348 (LLDL…SFIK), and 353 to 373 (LALT…YNCL).

The protein belongs to the CBF/MAK21 family.

The protein resides in the membrane. This is an uncharacterized protein from Schizosaccharomyces pombe (strain 972 / ATCC 24843) (Fission yeast).